The chain runs to 116 residues: Large ribosomal subunit protein bL19 (116 aa).

Belongs to the bacterial ribosomal protein bL19 family.

Its function is as follows. This protein is located at the 30S-50S ribosomal subunit interface and may play a role in the structure and function of the aminoacyl-tRNA binding site. This chain is Large ribosomal subunit protein bL19, found in Pseudothermotoga lettingae (strain ATCC BAA-301 / DSM 14385 / NBRC 107922 / TMO) (Thermotoga lettingae).